The following is a 551-amino-acid chain: Probable NADH-ubiquinone oxidoreductase C3A11.07, mitochondrial (551 aa).

The N-terminal 37 residues, 1–37 (MLFSRSILRGMPKAGIPKSPLALSASRNLRLANSVRF), are a transit peptide targeting the mitochondrion. An FAD-binding site is contributed by 93–123 (TLVVLGAGWGATSILRTIDTSLFNVIVVSPR). 255–291 (VHTVVVGGGPTGMEFAGEMADFIEDDLKSWYPELADD) is a binding site for NAD(+).

The protein belongs to the NADH dehydrogenase family.

Its subcellular location is the mitochondrion. The catalysed reaction is a quinone + NADH + H(+) = a quinol + NAD(+). It catalyses the reaction a ubiquinone + NADH + H(+) = a ubiquinol + NAD(+). In terms of biological role, catalyzes the oxidation of NADH. The chain is Probable NADH-ubiquinone oxidoreductase C3A11.07, mitochondrial from Schizosaccharomyces pombe (strain 972 / ATCC 24843) (Fission yeast).